Consider the following 111-residue polypeptide: Large ribosomal subunit protein uL22 (111 aa).

This sequence belongs to the universal ribosomal protein uL22 family. As to quaternary structure, part of the 50S ribosomal subunit.

Its function is as follows. This protein binds specifically to 23S rRNA; its binding is stimulated by other ribosomal proteins, e.g. L4, L17, and L20. It is important during the early stages of 50S assembly. It makes multiple contacts with different domains of the 23S rRNA in the assembled 50S subunit and ribosome. In terms of biological role, the globular domain of the protein is located near the polypeptide exit tunnel on the outside of the subunit, while an extended beta-hairpin is found that lines the wall of the exit tunnel in the center of the 70S ribosome. This Clostridium kluyveri (strain NBRC 12016) protein is Large ribosomal subunit protein uL22.